Reading from the N-terminus, the 151-residue chain is Putative olfactory receptor 13C6 (151 aa).

The Extracellular portion of the chain corresponds to 1–27 (MVSANQTASVTEFILLGLSAHPKLEKT). N5 is a glycosylation site (N-linked (GlcNAc...) asparagine). A helical transmembrane segment spans residues 28–48 (FFVLILLMYLVILLGNGVLIL). At 49 to 61 (MTVSNSHLHMPMY) the chain is on the cytoplasmic side. A helical membrane pass occupies residues 62-82 (FFLGNLSFLDICYTTSSVPLI). Residues 83 to 100 (LDSFLTPRKTISFSACAV) lie on the Extracellular side of the membrane. A helical transmembrane segment spans residues 101–121 (QMFLSFAMGATECVLLSMMAF).

Belongs to the G-protein coupled receptor 1 family.

The protein localises to the cell membrane. In terms of biological role, odorant receptor. The chain is Putative olfactory receptor 13C6 from Homo sapiens (Human).